The primary structure comprises 93 residues: Mitochondrial import inner membrane translocase subunit TIM10 (93 aa).

Positions 1–31 are interaction with transmembrane regions of transmembrane proteins in transit; the sequence is MSFLGFGGGQPQLSSQQKIQAAEAELDLVTD. Positions 40-65 match the Twin CX3C motif motif; the sequence is CYKKCINTSYSEGELNKNESSCLDRC. 2 cysteine pairs are disulfide-bonded: Cys-40–Cys-65 and Cys-44–Cys-61. The required for heterohexamerization stretch occupies residues 73 to 93; that stretch reads NVQVGENMQKMGQSFNAAGKF.

The protein belongs to the small Tim family. Heterohexamer; composed of 3 copies of TIM9 and 3 copies of TIM10, named soluble 70 kDa complex. Associates directly with the TIM12 component of the TIM22 complex, whose core is composed of TIM18, TIM22 and TIM54. Interacts with the transmembrane regions of multi-pass transmembrane proteins in transit.

Its subcellular location is the mitochondrion inner membrane. It is found in the mitochondrion intermembrane space. Its function is as follows. Mitochondrial intermembrane chaperone that participates in the import and insertion of multi-pass transmembrane proteins into the mitochondrial inner membrane. Also required for the transfer of beta-barrel precursors from the TOM complex to the sorting and assembly machinery (SAM complex) of the outer membrane. Acts as a chaperone-like protein that protects the hydrophobic precursors from aggregation and guide them through the mitochondrial intermembrane space. Compared to TIM9, it may function as a substrate sensor. This chain is Mitochondrial import inner membrane translocase subunit TIM10 (TIM10), found in Saccharomyces cerevisiae (strain ATCC 204508 / S288c) (Baker's yeast).